The following is a 617-amino-acid chain: Dihydroxy-acid dehydratase (617 aa).

Residue aspartate 81 coordinates Mg(2+). Cysteine 122 contacts [2Fe-2S] cluster. 2 residues coordinate Mg(2+): aspartate 123 and lysine 124. Position 124 is an N6-carboxylysine (lysine 124). Residue cysteine 195 coordinates [2Fe-2S] cluster. Glutamate 492 provides a ligand contact to Mg(2+). Serine 518 (proton acceptor) is an active-site residue.

The protein belongs to the IlvD/Edd family. As to quaternary structure, homodimer. The cofactor is [2Fe-2S] cluster. Mg(2+) serves as cofactor.

It carries out the reaction (2R)-2,3-dihydroxy-3-methylbutanoate = 3-methyl-2-oxobutanoate + H2O. It catalyses the reaction (2R,3R)-2,3-dihydroxy-3-methylpentanoate = (S)-3-methyl-2-oxopentanoate + H2O. It participates in amino-acid biosynthesis; L-isoleucine biosynthesis; L-isoleucine from 2-oxobutanoate: step 3/4. Its pathway is amino-acid biosynthesis; L-valine biosynthesis; L-valine from pyruvate: step 3/4. Functionally, functions in the biosynthesis of branched-chain amino acids. Catalyzes the dehydration of (2R,3R)-2,3-dihydroxy-3-methylpentanoate (2,3-dihydroxy-3-methylvalerate) into 2-oxo-3-methylpentanoate (2-oxo-3-methylvalerate) and of (2R)-2,3-dihydroxy-3-methylbutanoate (2,3-dihydroxyisovalerate) into 2-oxo-3-methylbutanoate (2-oxoisovalerate), the penultimate precursor to L-isoleucine and L-valine, respectively. In Xanthobacter autotrophicus (strain ATCC BAA-1158 / Py2), this protein is Dihydroxy-acid dehydratase.